We begin with the raw amino-acid sequence, 207 residues long: Ras-related protein RABH1e (207 aa).

GTP is bound at residue 16-23; it reads GDQSVGKT. An Effector region motif is present at residues 38–46; that stretch reads YQATIGIDF. Residues 64–68, 122–125, and 152–153 contribute to the GTP site; these read DTAGQ, NKTD, and SA. Residues Cys-205 and Cys-207 are each lipidated (S-geranylgeranyl cysteine). At Cys-207 the chain carries Cysteine methyl ester.

It belongs to the small GTPase superfamily. Rab family.

The protein resides in the golgi apparatus membrane. In terms of biological role, protein transport. Regulator of membrane traffic from the Golgi apparatus towards the endoplasmic reticulum (ER). The sequence is that of Ras-related protein RABH1e (RABH1E) from Arabidopsis thaliana (Mouse-ear cress).